Reading from the N-terminus, the 880-residue chain is GATOR2 complex protein MIOS-A (880 aa).

WD repeat units follow at residues 60–102, 113–157, 185–224, 226–264, 268–309, and 399–441; these read SDTP…NSKC, KHAR…TPEV, GQND…QKMF, NTKA…KPVL, EQPK…TPIG, and RLRA…KQYA. Residues 740-786 form a C4-type zinc finger; that stretch reads VSCNFCGKSISYSCSSVPHQGRGFSQYGVSGSPTKSKFTSCPGCRKP. C742, C745, C780, C783, C793, C832, C835, H837, H840, H843, C854, C859, and C863 together coordinate Zn(2+). Residues 787-868 form an RING-type; atypical zinc finger; it reads LPRCALCLIN…CSCKCMQLDT (82 aa).

This sequence belongs to the WD repeat mio family. Component of the GATOR2 subcomplex, composed of MIOS, SEC13, SEH1L, WDR24 and WDR59. The GATOR2 complex interacts with CASTOR1 and CASTOR2; the interaction is negatively regulated by arginine. The GATOR2 complex interacts with SESN1, SESN2 and SESN3; the interaction is negatively regulated by amino acids. Interacts with SAR1; the interaction is direct, disrupted by leucine and mediates the interaction of SAR1 with the GATOR2 complex to negatively regulate the TORC1 signaling upon leucine deprivation.

The protein resides in the lysosome membrane. With respect to regulation, the GATOR2 complex is negatively regulated by the upstream amino acid sensors CASTOR1 and SESN2, which sequester the GATOR2 complex in absence of amino acids. In the presence of abundant amino acids, GATOR2 is released from CASTOR1 and SESN2 and activated. In terms of biological role, as a component of the GATOR2 complex, functions as an activator of the amino acid-sensing branch of the mTORC1 signaling pathway. The GATOR2 complex indirectly activates mTORC1 through the inhibition of the GATOR1 subcomplex. GATOR2 probably acts as an E3 ubiquitin-protein ligase toward GATOR1. In the presence of abundant amino acids, the GATOR2 complex mediates ubiquitination of the NPRL2 core component of the GATOR1 complex, leading to GATOR1 inactivation. In the absence of amino acids, GATOR2 is inhibited, activating the GATOR1 complex. Within the GATOR2 complex, MIOS is required to prevent autoubiquitination of WDR24, the catalytic subunit of the complex. The protein is GATOR2 complex protein MIOS-A of Xenopus laevis (African clawed frog).